The chain runs to 76 residues: Small ribosomal subunit protein bS18 (76 aa).

Belongs to the bacterial ribosomal protein bS18 family. In terms of assembly, part of the 30S ribosomal subunit. Forms a tight heterodimer with protein bS6.

Its function is as follows. Binds as a heterodimer with protein bS6 to the central domain of the 16S rRNA, where it helps stabilize the platform of the 30S subunit. The polypeptide is Small ribosomal subunit protein bS18 (Pelotomaculum thermopropionicum (strain DSM 13744 / JCM 10971 / SI)).